We begin with the raw amino-acid sequence, 718 residues long: Fatty acid oxidation complex subunit alpha (718 aa).

Residues 1–188 are enoyl-CoA hydratase/isomerase; it reads MIYQGESIRV…KVGAVDAVVE (188 aa). Asp-295 lines the substrate pocket. The 3-hydroxyacyl-CoA dehydrogenase stretch occupies residues 310–718; sequence TKEIKTAGVL…KSYFDTTSAK (409 aa). NAD(+) contacts are provided by residues Met-324, Asp-343, 400–402, Lys-407, and Ser-429; that span reads VVE. Residue His-450 is the For 3-hydroxyacyl-CoA dehydrogenase activity of the active site. Asn-453 contacts NAD(+). Substrate is bound by residues Asn-500 and Tyr-658.

The protein in the N-terminal section; belongs to the enoyl-CoA hydratase/isomerase family. It in the C-terminal section; belongs to the 3-hydroxyacyl-CoA dehydrogenase family. In terms of assembly, heterotetramer of two alpha chains (FadB) and two beta chains (FadA).

The enzyme catalyses a (3S)-3-hydroxyacyl-CoA + NAD(+) = a 3-oxoacyl-CoA + NADH + H(+). It catalyses the reaction a (3S)-3-hydroxyacyl-CoA = a (2E)-enoyl-CoA + H2O. It carries out the reaction a 4-saturated-(3S)-3-hydroxyacyl-CoA = a (3E)-enoyl-CoA + H2O. The catalysed reaction is (3S)-3-hydroxybutanoyl-CoA = (3R)-3-hydroxybutanoyl-CoA. The enzyme catalyses a (3Z)-enoyl-CoA = a 4-saturated (2E)-enoyl-CoA. It catalyses the reaction a (3E)-enoyl-CoA = a 4-saturated (2E)-enoyl-CoA. The protein operates within lipid metabolism; fatty acid beta-oxidation. Its function is as follows. Involved in the aerobic and anaerobic degradation of long-chain fatty acids via beta-oxidation cycle. Catalyzes the formation of 3-oxoacyl-CoA from enoyl-CoA via L-3-hydroxyacyl-CoA. It can also use D-3-hydroxyacyl-CoA and cis-3-enoyl-CoA as substrate. The polypeptide is Fatty acid oxidation complex subunit alpha (Idiomarina loihiensis (strain ATCC BAA-735 / DSM 15497 / L2-TR)).